The chain runs to 380 residues: Cytochrome b (380 aa).

Helical transmembrane passes span 33 to 53 (FGSL…FLAM), 77 to 98 (WLIR…YLHI), 113 to 133 (WNVG…GYVL), and 178 to 198 (FFAF…LHLL). Positions 83 and 97 each coordinate heme b. The heme b site is built by His-182 and His-196. Position 201 (His-201) interacts with a ubiquinone. A run of 4 helical transmembrane segments spans residues 226-246 (YKDL…ALFS), 288-308 (LGGV…PILH), 320-340 (FSQI…WIGG), and 347-367 (YIII…VFFP).

This sequence belongs to the cytochrome b family. In terms of assembly, the cytochrome bc1 complex contains 3 respiratory subunits (MT-CYB, CYC1 and UQCRFS1), 2 core proteins (UQCRC1 and UQCRC2) and probably 6 low-molecular weight proteins. It depends on heme b as a cofactor.

It localises to the mitochondrion inner membrane. Component of the ubiquinol-cytochrome c reductase complex (complex III or cytochrome b-c1 complex) that is part of the mitochondrial respiratory chain. The b-c1 complex mediates electron transfer from ubiquinol to cytochrome c. Contributes to the generation of a proton gradient across the mitochondrial membrane that is then used for ATP synthesis. This is Cytochrome b (mt-cyb) from Apogon semilineatus (Half-lined cardinal).